The sequence spans 103 residues: Small ribosomal subunit protein uS10 (103 aa).

This sequence belongs to the universal ribosomal protein uS10 family. As to quaternary structure, part of the 30S ribosomal subunit.

In terms of biological role, involved in the binding of tRNA to the ribosomes. In Bordetella petrii (strain ATCC BAA-461 / DSM 12804 / CCUG 43448), this protein is Small ribosomal subunit protein uS10.